A 383-amino-acid polypeptide reads, in one-letter code: Chitinase-3-like protein 1 (383 aa).

The N-terminal stretch at methionine 1–alanine 21 is a signal peptide. The GH18 domain maps to tyrosine 22 to valine 383. Cysteine 26 and cysteine 51 are joined by a disulfide. Asparagine 60 carries N-linked (GlcNAc...) asparagine glycosylation. Residues glutamate 70 to tryptophan 71, glycine 97 to asparagine 100, tyrosine 141, leucine 204 to aspartate 207, and lysine 263 each bind chitin. Cysteine 300 and cysteine 364 are oxidised to a cystine. An important for AKT1 activation and IL8 production region spans residues glutamine 324–alanine 338. Tryptophan 352 contributes to the chitin binding site.

The protein belongs to the glycosyl hydrolase 18 family. As to quaternary structure, monomer. In terms of tissue distribution, detected in mammary gland.

The protein resides in the secreted. The protein localises to the extracellular space. Its subcellular location is the cytoplasm. It localises to the perinuclear region. It is found in the endoplasmic reticulum. In terms of biological role, carbohydrate-binding lectin with a preference for chitin. Has no chitinase activity. May play a role in tissue remodeling and in the capacity of cells to respond to and cope with changes in their environment. Plays a role in T-helper cell type 2 (Th2) inflammatory response and IL-13-induced inflammation, regulating allergen sensitization, inflammatory cell apoptosis, dendritic cell accumulation and M2 macrophage differentiation. Facilitates invasion of pathogenic enteric bacteria into colonic mucosa and lymphoid organs. Mediates activation of AKT1 signaling pathway and subsequent IL8 production in colonic epithelial cells. Regulates antibacterial responses in lung by contributing to macrophage bacterial killing, controlling bacterial dissemination and augmenting host tolerance. Also regulates hyperoxia-induced injury, inflammation and epithelial apoptosis in lung. This Bubalus bubalis (Domestic water buffalo) protein is Chitinase-3-like protein 1 (CHI3L1).